The chain runs to 486 residues: Maintenance of mitochondrial morphology protein 1 (486 aa).

Residues 1-20 lie on the Lumenal side of the membrane; sequence MNFQQSAIPPFSFLLSFTQG. A helical transmembrane segment spans residues 21-41; sequence FLLGQLSVVLLIGAFIKFFIF. Residues 42 to 486 are Cytoplasmic-facing; that stretch reads GEAPPPPSRG…GSLPDGAVGN (445 aa). Disordered stretches follow at residues 70–96, 271–320, and 387–486; these read TNEA…SSST, TPPL…SPKS, and RTGV…AVGN. Polar residues predominate over residues 83–96; it reads STSNVLRPVPSSST. Residues 128–379 enclose the SMP-LTD domain; the sequence is QPESLDWFNV…EPRVQVVGLP (252 aa). Pro residues predominate over residues 271–282; sequence TPPLHTPSPSPA. Residues 292–306 are compositionally biased toward low complexity; the sequence is QSQPENNSSNPNQQS. Polar residues-rich tracts occupy residues 398–407 and 440–450; these read TGSNAASRSA and DSVSRSSSFNV. Residues 460-474 show a composition bias toward basic and acidic residues; the sequence is MTREDSRGAISDDFH.

The protein belongs to the MMM1 family. Homodimer. Component of the ER-mitochondria encounter structure (ERMES) or MDM complex, composed of mmm1, mdm10, mdm12 and mdm34. A mmm1 homodimer associates with one molecule of mdm12 on each side in a pairwise head-to-tail manner, and the SMP-LTD domains of mmm1 and mdm12 generate a continuous hydrophobic tunnel for phospholipid trafficking.

It localises to the endoplasmic reticulum membrane. Component of the ERMES/MDM complex, which serves as a molecular tether to connect the endoplasmic reticulum (ER) and mitochondria. Components of this complex are involved in the control of mitochondrial shape and protein biogenesis, and function in nonvesicular lipid trafficking between the ER and mitochondria. The mdm12-mmm1 subcomplex functions in the major beta-barrel assembly pathway that is responsible for biogenesis of all outer membrane beta-barrel proteins, and acts in a late step after the SAM complex. The mdm10-mdm12-mmm1 subcomplex further acts in the TOM40-specific pathway after the action of the mdm12-mmm1 complex. Essential for establishing and maintaining the structure of mitochondria and maintenance of mtDNA nucleoids. The sequence is that of Maintenance of mitochondrial morphology protein 1 from Aspergillus terreus (strain NIH 2624 / FGSC A1156).